We begin with the raw amino-acid sequence, 162 residues long: uncharacterized protein (162 aa).

A signal peptide spans 1–21 (MRLCGLLIFLSYIVYVDNAVT).

This is an uncharacterized protein from Caenorhabditis elegans.